Reading from the N-terminus, the 245-residue chain is Uridylate kinase (245 aa).

Position 20–23 (lysine 20–glycine 23) interacts with ATP. Glycine 62 lines the UMP pocket. Glycine 63 and arginine 67 together coordinate ATP. UMP-binding positions include aspartate 81 and isoleucine 142–threonine 149. ATP-binding residues include threonine 169, glutamine 170, tyrosine 175, and aspartate 178.

The protein belongs to the UMP kinase family. In terms of assembly, homohexamer.

It is found in the cytoplasm. The catalysed reaction is UMP + ATP = UDP + ADP. Its pathway is pyrimidine metabolism; CTP biosynthesis via de novo pathway; UDP from UMP (UMPK route): step 1/1. With respect to regulation, inhibited by UTP. Functionally, catalyzes the reversible phosphorylation of UMP to UDP. This chain is Uridylate kinase, found in Anaplasma marginale (strain St. Maries).